An 823-amino-acid polypeptide reads, in one-letter code: Lon protease (823 aa).

Residues 22 to 217 enclose the Lon N-terminal domain; the sequence is LPLLPVRDVV…KVNEHLNKEH (196 aa). ATP is bound at residue 369–376; the sequence is GPPGVGKT. In terms of domain architecture, Lon proteolytic spans 605-786; that stretch reads KNEVGIVTGL…DDVLAVALET (182 aa). Active-site residues include Ser-692 and Lys-735. Positions 788–823 are disordered; that stretch reads PPPPPASEGKPAATVKAPPRRGIAAPRKGAMAGAKS.

The protein belongs to the peptidase S16 family. As to quaternary structure, homohexamer. Organized in a ring with a central cavity.

It is found in the cytoplasm. The catalysed reaction is Hydrolysis of proteins in presence of ATP.. Functionally, ATP-dependent serine protease that mediates the selective degradation of mutant and abnormal proteins as well as certain short-lived regulatory proteins. Required for cellular homeostasis and for survival from DNA damage and developmental changes induced by stress. Degrades polypeptides processively to yield small peptide fragments that are 5 to 10 amino acids long. Binds to DNA in a double-stranded, site-specific manner. The chain is Lon protease from Geobacter metallireducens (strain ATCC 53774 / DSM 7210 / GS-15).